The sequence spans 206 residues: Probable 5-formyltetrahydrofolate cyclo-ligase (206 aa).

Residues 8–12 (KSELR) and R12 each bind ATP. Residues V54, E59, and 146-150 (HGKGY) each bind substrate. An ATP-binding site is contributed by 143–151 (RCGHGKGYY). Mg(2+) contacts are provided by D152 and D188.

It belongs to the 5-formyltetrahydrofolate cyclo-ligase family. As to quaternary structure, monomer. It depends on Mg(2+) as a cofactor.

The protein resides in the cytoplasm. The enzyme catalyses (6S)-5-formyl-5,6,7,8-tetrahydrofolate + ATP = (6R)-5,10-methenyltetrahydrofolate + ADP + phosphate. Functionally, contributes to tetrahydrofolate metabolism. Helps regulate carbon flow through the folate-dependent one-carbon metabolic network that supplies carbon for the biosynthesis of purines, thymidine and amino acids. Catalyzes the irreversible conversion of 5-formyltetrahydrofolate (5-CHO-H(4)PteGlu) to yield 5,10-methenyltetrahydrofolate. This Caenorhabditis elegans protein is Probable 5-formyltetrahydrofolate cyclo-ligase.